The following is a 279-amino-acid chain: Thymidylate synthase (279 aa).

Residue 132-133 (RR) coordinates dUMP. Residue Cys-153 is the Nucleophile of the active site. DUMP contacts are provided by residues 178–181 (RSND), Asn-189, and 219–221 (HIY). (6R)-5,10-methylene-5,6,7,8-tetrahydrofolate is bound at residue Asp-181. Ala-278 lines the (6R)-5,10-methylene-5,6,7,8-tetrahydrofolate pocket.

It belongs to the thymidylate synthase family. Bacterial-type ThyA subfamily. Homodimer.

It localises to the cytoplasm. It catalyses the reaction dUMP + (6R)-5,10-methylene-5,6,7,8-tetrahydrofolate = 7,8-dihydrofolate + dTMP. It participates in pyrimidine metabolism; dTTP biosynthesis. Catalyzes the reductive methylation of 2'-deoxyuridine-5'-monophosphate (dUMP) to 2'-deoxythymidine-5'-monophosphate (dTMP) while utilizing 5,10-methylenetetrahydrofolate (mTHF) as the methyl donor and reductant in the reaction, yielding dihydrofolate (DHF) as a by-product. This enzymatic reaction provides an intracellular de novo source of dTMP, an essential precursor for DNA biosynthesis. The sequence is that of Thymidylate synthase from Lactococcus lactis subsp. cremoris (strain SK11).